Consider the following 320-residue polypeptide: Phosphatidylserine decarboxylase proenzyme (320 aa).

Catalysis depends on charge relay system; for autoendoproteolytic cleavage activity residues Asp90, His147, and Ser254. The active-site Schiff-base intermediate with substrate; via pyruvic acid; for decarboxylase activity is Ser254. Ser254 carries the pyruvic acid (Ser); by autocatalysis modification. The tract at residues 290-320 is disordered; sequence TAAAEPAPLPEEEIRAEHRASPLVDDKQDQG. Residues 301–320 are compositionally biased toward basic and acidic residues; that stretch reads EEIRAEHRASPLVDDKQDQG.

This sequence belongs to the phosphatidylserine decarboxylase family. PSD-B subfamily. Prokaryotic type I sub-subfamily. In terms of assembly, heterodimer of a large membrane-associated beta subunit and a small pyruvoyl-containing alpha subunit. Requires pyruvate as cofactor. In terms of processing, is synthesized initially as an inactive proenzyme. Formation of the active enzyme involves a self-maturation process in which the active site pyruvoyl group is generated from an internal serine residue via an autocatalytic post-translational modification. Two non-identical subunits are generated from the proenzyme in this reaction, and the pyruvate is formed at the N-terminus of the alpha chain, which is derived from the carboxyl end of the proenzyme. The autoendoproteolytic cleavage occurs by a canonical serine protease mechanism, in which the side chain hydroxyl group of the serine supplies its oxygen atom to form the C-terminus of the beta chain, while the remainder of the serine residue undergoes an oxidative deamination to produce ammonia and the pyruvoyl prosthetic group on the alpha chain. During this reaction, the Ser that is part of the protease active site of the proenzyme becomes the pyruvoyl prosthetic group, which constitutes an essential element of the active site of the mature decarboxylase.

Its subcellular location is the cell membrane. The enzyme catalyses a 1,2-diacyl-sn-glycero-3-phospho-L-serine + H(+) = a 1,2-diacyl-sn-glycero-3-phosphoethanolamine + CO2. It participates in phospholipid metabolism; phosphatidylethanolamine biosynthesis; phosphatidylethanolamine from CDP-diacylglycerol: step 2/2. Catalyzes the formation of phosphatidylethanolamine (PtdEtn) from phosphatidylserine (PtdSer). This is Phosphatidylserine decarboxylase proenzyme from Klebsiella pneumoniae subsp. pneumoniae (strain ATCC 700721 / MGH 78578).